Consider the following 255-residue polypeptide: Accessory gland-specific peptide 26Aa (255 aa).

Residues 1–18 (MNLILLCSQILLLLFTVA) form the signal peptide. The tract at residues 86–110 (PINNSKSRKNSSTLPSQILTDKPNQ) is disordered. A compositionally biased stretch (polar residues) spans 87-110 (INNSKSRKNSSTLPSQILTDKPNQ). N-linked (GlcNAc...) asparagine glycosylation is found at Asn-88, Asn-95, and Asn-136. 2 disordered regions span residues 177–196 (NAQN…SKDI) and 235–255 (NNPA…PSTT). Residues 183–192 (KSTKSCKKRP) show a composition bias toward basic residues. Residues 245–255 (KSPSEGNPSTT) show a composition bias toward polar residues.

In terms of processing, it undergoes several cleavages as it is secreted and it is further processed in the recipient female. Main cells of the accessory glands of males.

It is found in the secreted. The protein resides in the extracellular space. In terms of biological role, this protein is transferred from male to female's hemolymph during mating, affecting egglaying and behavior after mating. This is Accessory gland-specific peptide 26Aa (Acp26Aa) from Drosophila sechellia (Fruit fly).